The primary structure comprises 367 residues: DNA-directed RNA polymerase II subunit GRINL1A (367 aa).

The stretch at 15-40 (DLERRSLAELREMLKRQERLLRNEKF) forms a coiled coil. The interval 29 to 68 (KRQERLLRNEKFICKLPDKGKKIFDSFAKLKAAIAECEEV) is important for transcription repressor activity. 3 stretches are compositionally biased toward polar residues: residues 117-131 (SVDN…QNQG), 176-185 (RVSSQAEDTS), and 205-225 (GEQQ…SGTQ). Disordered regions lie at residues 117–185 (SVDN…EDTS), 203–225 (DQGE…SGTQ), and 254–281 (PFRQ…RRDK). The interval 226-297 (KKPHYMEVLE…TAARLLPLHH (72 aa)) is interaction with Pol II. Serine 269 is subject to Phosphoserine. The important for transcription repressor activity stretch occupies residues 298–313 (MPTQLLSIEESLALQK). Residues 300–329 (TQLLSIEESLALQKQRKQKYEEMQAKLAAQ) adopt a coiled-coil conformation. The interval 314 to 339 (QRKQKYEEMQAKLAAQKLAERLNIKM) is interaction with Pol II. The segment at 335–367 (LNIKMRSYNPEGESSGRYREVRDEDDDWSSDEF) is disordered. Residues 357–367 (DEDDDWSSDEF) show a composition bias toward acidic residues.

This sequence belongs to the GRINL1 family. In terms of assembly, component of the Pol II(G) complex, which contains the RNA polymerase II (Pol II) core complex subunits and POLR2M isoform 1. Pol II(G) appears to be an abundant form of Pol II. Post-translationally, dephosphorylated at Ser-269 by the PNUTS-PP1 complex, promoting RNA polymerase II transcription pause-release.

It localises to the nucleus. Appears to be a stable component of the Pol II(G) complex form of RNA polymerase II (Pol II). Pol II synthesizes mRNA precursors and many functional non-coding RNAs and is the central component of the basal RNA polymerase II transcription machinery. May play a role in the Mediator complex-dependent regulation of transcription activation. Acts as a negative regulator of transcriptional activation; this repression is relieved by the Mediator complex, which restores Pol II(G) activator-dependent transcription to a level equivalent to that of Pol II. This Pongo abelii (Sumatran orangutan) protein is DNA-directed RNA polymerase II subunit GRINL1A (POLR2M).